A 213-amino-acid polypeptide reads, in one-letter code: Cell division protein SepF 2 (213 aa).

The segment at 16–63 (EDDGYDGRGFDPDDDFEPELDPEPERDRRRHEPPHQSHQALHPQRDES) is disordered. Acidic residues predominate over residues 27 to 39 (PDDDFEPELDPEP).

The protein belongs to the SepF family. Homodimer. Interacts with FtsZ.

The protein localises to the cytoplasm. Its function is as follows. Cell division protein that is part of the divisome complex and is recruited early to the Z-ring. Probably stimulates Z-ring formation, perhaps through the cross-linking of FtsZ protofilaments. Its function overlaps with FtsA. The chain is Cell division protein SepF 2 from Streptomyces avermitilis (strain ATCC 31267 / DSM 46492 / JCM 5070 / NBRC 14893 / NCIMB 12804 / NRRL 8165 / MA-4680).